Reading from the N-terminus, the 100-residue chain is Secreted protein of Ly-6 domain 1 (100 aa).

The N-terminal stretch at 1–22 (MAKCLLLLLLVVLSSLLGLPQA) is a signal peptide. In terms of domain architecture, UPAR/Ly6 spans 23–100 (LECFQCNRVN…CHDSPLCNKF (78 aa)). Cystine bridges form between cysteine 25–cysteine 52, cysteine 28–cysteine 37, cysteine 44–cysteine 70, cysteine 74–cysteine 90, and cysteine 91–cysteine 97. A glycan (N-linked (GlcNAc...) asparagine) is linked at asparagine 60.

Post-translationally, glycosylated. As to expression, expressed in placenta, where it is detected in both fetal tissues (cotyledon and intercotyledon) and maternal tissues (caruncle and intercaruncular endometrium) (at protein level). Expressed in the mesenchyme area of villi in the cotyledon (at protein level). In endometrium, expressed in the luminal epithelium and weakly in the subluminal stroma (at protein level). Detected in trophoblast mononucleate cells (TMCs) (at protein level). Also detected in trophoblast binucleate cells (BNCs). Overall, expression is strongest in fetal tissue and lower in maternal tissue. Not detected in other tissues tested.

It localises to the secreted. In terms of biological role, binds specifically to type I collagen. The sequence is that of Secreted protein of Ly-6 domain 1 from Bos taurus (Bovine).